We begin with the raw amino-acid sequence, 502 residues long: Cytochrome P450 71B16 (502 aa).

A helical membrane pass occupies residues 1 to 21 (MAISLLCLFLITLVSLIFVVK). Position 444 (Cys444) interacts with heme.

It belongs to the cytochrome P450 family. The cofactor is heme.

It localises to the membrane. This Arabidopsis thaliana (Mouse-ear cress) protein is Cytochrome P450 71B16 (CYP71B16).